Reading from the N-terminus, the 311-residue chain is Dehydrogenase/reductase SDR family member 7C (311 aa).

The signal sequence occupies residues 1–18 (MGFLTFLIVPLLILGISG). NAD(+) is bound at residue 41–65 (VITDAISGLGKECSRVFHSAGARLV). Thr178 provides a ligand contact to substrate. Residue Tyr191 is the Proton acceptor of the active site.

Belongs to the short-chain dehydrogenases/reductases (SDR) family.

Its subcellular location is the secreted. Functionally, putative oxidoreductase. This is Dehydrogenase/reductase SDR family member 7C (dhrs7c) from Xenopus tropicalis (Western clawed frog).